The primary structure comprises 252 residues: Small ribosomal subunit protein uS3 (252 aa).

One can recognise a KH type-2 domain in the interval 16 to 85; that stretch reads IDEYLETKLE…NPQVEVKEVD (70 aa). The tract at residues 233-252 is disordered; the sequence is EESEIEEITEEIEDVETLEE.

Belongs to the universal ribosomal protein uS3 family. As to quaternary structure, part of the 30S ribosomal subunit.

Binds the lower part of the 30S subunit head. The sequence is that of Small ribosomal subunit protein uS3 from Methanosphaera stadtmanae (strain ATCC 43021 / DSM 3091 / JCM 11832 / MCB-3).